Reading from the N-terminus, the 85-residue chain is Antitoxin VapB43 (85 aa).

The disordered stretch occupies residues 37–60 (GLNPPKPQAAGRYRVQPSGKGGLR).

Functionally, antitoxin component of a type II toxin-antitoxin (TA) system. The protein is Antitoxin VapB43 (vapB43) of Mycobacterium tuberculosis (strain CDC 1551 / Oshkosh).